The following is a 557-amino-acid chain: MSSTRSRRKRDPEIVIARDTDSELSSSEEEEEEEDNYPFSESEEEDEAVKNGGKIELEKNKAKGKAPITVKLIKKVCKVCKQPGHEAGFKGATYIDCPMKPCFLCKMPGHTTMSCPHRVVTDHGILPTSHRNTKNPIDFVFKRQLQPRIPPIKPKYVIPDQVHCAVIRYHSRRVTCLEFHPTKNNILLSGDKKGQIGVWDFGKVYEKNVYGNIHSVQVNNMRFSPTNDDMVYSASSDGTIGYTDLETGTSSTLLNLNPDGWQGANSWKMLYGMDINSEKGVVLAADNFGFLHMIDHRTNNSTGEPILIHKQGSKVCGLDCNPVQPELLLSCGNDHFARIWDMRKLQPKASLHDLAHKRVVNSAYFSPSSGTKILTTCQDNRIRIWDSIFGNLDLPSREIVHSNDFNRHLTPFKAEWDPKDTSESLIVIGRYISENYNGTALHPIDFIDASNGQLVAEVMDPNITTITPVNKLHPRDDVLASGSSRSLFIWRPQDNTEMVEEKKDKKIIICYGDSKKKGKKQKRGSDDEDDEDDIFSSKGKNIKVNKYQAKTTKKTKT.

Residues 1-55 (MSSTRSRRKRDPEIVIARDTDSELSSSEEEEEEEDNYPFSESEEEDEAVKNGGKI) form a disordered region. Basic and acidic residues predominate over residues 10-21 (RDPEIVIARDTD). Residues 26–47 (SSEEEEEEEDNYPFSESEEEDE) show a composition bias toward acidic residues. The CCHC-type zinc finger occupies 100-117 (KPCFLCKMPGHTTMSCPH). WD repeat units lie at residues 169–209 (YHSR…EKNV), 213–255 (IHSV…TLLN), 265–304 (NSWKMLYGMDINSEKGVVLAADNFGFLHMIDHRTNNSTGE), 310–350 (KQGS…PKAS), 355–395 (AHKR…LDLP), 415–458 (EWDP…VAEV), and 461–500 (PNITTITPVNKLHPRDDVLASGSSRSLFIWRPQDNTEMVE). The DWD box signature appears at 328-343 (LLSCGNDHFARIWDMR). Residues 515–538 (KKKGKKQKRGSDDEDDEDDIFSSK) form a disordered region.

This sequence belongs to the WD repeat DDB2/WDR76 family. As to quaternary structure, component of the UV-DDB complex, which is composed of DDB1A and DDB2. Interacts with CUL4. Expressed in roots and flowers. Expressed at low levels in stems.

It localises to the nucleus. Its pathway is protein modification; protein ubiquitination. Its function is as follows. May function as the substrate recognition module for a DCX (DDB1-CUL4-X-box) E3 ubiquitin-protein ligase complex including DDB1A and CUL4. Required for DNA repair. Binds to DDB1A to form the UV-damaged DNA-binding protein complex (the UV-DDB complex). The UV-DDB complex may recognize UV-induced DNA damage and recruit proteins of the nucleotide excision repair pathway (the NER pathway) to initiate DNA repair. Involved in UV-B tolerance and genome integrity. In association with ATCSA-1, is necessary for repair of UV-B-induced DNA lesions. This is Protein DAMAGED DNA-BINDING 2 (DDB2) from Arabidopsis thaliana (Mouse-ear cress).